The following is a 242-amino-acid chain: Small ribosomal subunit protein uS3 (242 aa).

The 72-residue stretch at 39–110 (IRRFIHKKYG…QVRINVVEVE (72 aa)) folds into the KH type-2 domain. The segment at 216-242 (QSMPVGASPRRRGNRRPQQFEDRSNEG) is disordered. The segment covering 233-242 (QQFEDRSNEG) has biased composition (basic and acidic residues).

The protein belongs to the universal ribosomal protein uS3 family. Part of the 30S ribosomal subunit. Forms a tight complex with proteins S10 and S14.

In terms of biological role, binds the lower part of the 30S subunit head. Binds mRNA in the 70S ribosome, positioning it for translation. The sequence is that of Small ribosomal subunit protein uS3 from Prochlorococcus marinus (strain MIT 9303).